A 156-amino-acid chain; its full sequence is Small ribosomal subunit protein uS7 (156 aa).

Belongs to the universal ribosomal protein uS7 family. As to quaternary structure, part of the 30S ribosomal subunit. Contacts proteins S9 and S11.

One of the primary rRNA binding proteins, it binds directly to 16S rRNA where it nucleates assembly of the head domain of the 30S subunit. Is located at the subunit interface close to the decoding center, probably blocks exit of the E-site tRNA. This Microcystis aeruginosa (strain NIES-843 / IAM M-2473) protein is Small ribosomal subunit protein uS7.